The following is a 465-amino-acid chain: Lipase 10 (465 aa).

The signal sequence occupies residues 1-16 (MKTLLIFLAFLSSIFA). Cys-112 and Cys-285 are disulfide-bonded. Ser-196 (charge relay system) is an active-site residue. Residues Asn-231 and Asn-319 are each glycosylated (N-linked (GlcNAc...) asparagine). Catalysis depends on charge relay system residues Asp-348 and His-381. A disulfide bridge connects residues Cys-364 and Cys-409.

The protein belongs to the AB hydrolase superfamily. Lipase family. Class Lip subfamily.

It is found in the secreted. It catalyses the reaction a triacylglycerol + H2O = a diacylglycerol + a fatty acid + H(+). Its function is as follows. Secreted lipase that is able to hydrolyze both the neutral triacylglycerols and the monopalmitate ester Tween 40, allowing the use of hydrolyzed products as carbon sources. Has broad lipolytic activity, which may be important for colonization and subsequent infection, therefore contributing to the persistence and virulence in human tissue. This is Lipase 10 from Candida albicans (strain SC5314 / ATCC MYA-2876) (Yeast).